We begin with the raw amino-acid sequence, 556 residues long: 2-succinyl-5-enolpyruvyl-6-hydroxy-3-cyclohexene-1-carboxylate synthase (556 aa).

It belongs to the TPP enzyme family. MenD subfamily. Homodimer. Mg(2+) is required as a cofactor. The cofactor is Mn(2+). Thiamine diphosphate serves as cofactor.

The catalysed reaction is isochorismate + 2-oxoglutarate + H(+) = 5-enolpyruvoyl-6-hydroxy-2-succinyl-cyclohex-3-ene-1-carboxylate + CO2. It participates in quinol/quinone metabolism; 1,4-dihydroxy-2-naphthoate biosynthesis; 1,4-dihydroxy-2-naphthoate from chorismate: step 2/7. Its pathway is quinol/quinone metabolism; menaquinone biosynthesis. Its function is as follows. Catalyzes the thiamine diphosphate-dependent decarboxylation of 2-oxoglutarate and the subsequent addition of the resulting succinic semialdehyde-thiamine pyrophosphate anion to isochorismate to yield 2-succinyl-5-enolpyruvyl-6-hydroxy-3-cyclohexene-1-carboxylate (SEPHCHC). This chain is 2-succinyl-5-enolpyruvyl-6-hydroxy-3-cyclohexene-1-carboxylate synthase, found in Saccharopolyspora erythraea (strain ATCC 11635 / DSM 40517 / JCM 4748 / NBRC 13426 / NCIMB 8594 / NRRL 2338).